The sequence spans 232 residues: Replicative helicase loading/DNA remodeling protein DnaD (232 aa).

Residues 1-98 form an N-terminal domain region; that stretch reads MKKQQFIDMQ…QNGIKFEKYS (98 aa). A DDBH1 region spans residues 1-116; sequence MKKQQFIDMQ…YEYIQLAQNQ (116 aa). Residues 99 to 205 are C-terminal domain; the sequence is LQPLWGKLYE…VEQAKIHSQK (107 aa). The segment at 131–200 is DDBH2; sequence TIFEEEFARP…NGLKTVEQAK (70 aa). Residues 206-232 are C-terminal tail; sequence FRRVQAKQNEPQKEYKRQVPFYNWLEQ.

The protein belongs to the DnaB/DnaD family. In terms of assembly, the DNA replisome assembles sequentially on oriC in this order; DnaA, DnaD, DnaB, DnaI-DnaC helicase. Homodimer. Homotetramer. Oligomerization in vitro is concentration dependent. Part of the replication restart primosome which assembles in this order; PriA, DnaD then DnaB. The preferred DNA substrate mimics an arrested DNA replication fork with unreplicated lagging strand. Interacts with DnaA, DnaB and PriA. Interaction with DnaB requires DnaD to dimerize.

It localises to the cytoplasm. Its activity is regulated as follows. Recruitment to oriC requires DnaA but not DnaB, DnaC or DnaI and is blocked by SirA. Required to load replicative helicase DnaC onto replication forks. Binds to a DnaD recognition element (DRE) which has pairs of 5'-TnnT-3' motifs; there is a strong DRE at oriC opposite the DnaA-trios recognized by DnaA. During DNA replication from the origin of replication (oriC) in the DNA replisome, DnaD is required after DnaA, before DnaB and subsequent helicase DnaC loading. A component of the replication restart primosome, which reloads the replicative helicase on sites other than oriC. DnaB, DnaD and DnaI may also be required for a PriA-independent pathway of replication fork restart. DnaB and DnaD work together to allow DnaB access to single-stranded (ss)DNA. Has DNA remodeling activity that converts supercoiled plasmid into an open circular form; DnaD forms scaffolds inside the plasmid DNA. Plasmid relaxation incorporates both wrapping around the DnaD protein scaffold and simultaneous untwisting, no nicking of the DNA is seen. Also converts linear DNA into an open circular form. Disrupts a replicative helicase-DnaI complex. Inhibits the ability of DnaA-ATP to form a helix on DNA; does not disassemble preformed helices in vitro. Binds ssDNA, and replication fork-like substrates, supercoiled plasmid, but not stably to short double-stranded (ds)DNA. DnaD stimulates DnaB DNA-binding activities. DnaB and DnaD are required to load helicase on the repN plasmid origin of replication (oriN). Causes a severe growth defect upon overexpression even in an oriC-independent strain. The protein is Replicative helicase loading/DNA remodeling protein DnaD of Bacillus subtilis (strain 168).